Here is a 332-residue protein sequence, read N- to C-terminus: PRKC apoptosis WT1 regulator protein (332 aa).

2 stretches are compositionally biased toward polar residues: residues 1 to 14 and 52 to 62; these read MATG…STTD and AQTTAAGTSEL. The disordered stretch occupies residues 1–253; the sequence is MATGGYRSSG…HNRDTSAPAN (253 aa). A B30.2/SPRY domain-binding motif motif is present at residues 61 to 65; it reads ELNHG. The segment covering 65–79 has biased composition (low complexity); that stretch reads GPAGAAAPAAPGPGA. Positions 137-153 match the Nuclear localization signal motif; that stretch reads RKGKGQIEKRKLREKRR. The segment at 137–195 is selective for apoptosis induction in cancer cells (SAC); that stretch reads RKGKGQIEKRKLREKRRSTGVVNIPAAECLDEYEDDEAGQKERKREDAITQQNTIQNEA. Thr155 carries the phosphothreonine; by PKA modification. Basic and acidic residues predominate over residues 174–184; sequence AGQKERKREDA. Residues 176 to 198 adopt a coiled-coil conformation; it reads QKERKREDAITQQNTIQNEAASL. Residues 185-195 show a composition bias toward polar residues; the sequence is ITQQNTIQNEA. Position 223 is a phosphoserine (Ser223). The span at 234–247 shows a compositional bias: basic and acidic residues; it reads PRTDRSGFSRHNRD. The interval 292-332 is leucine-zipper; that stretch reads IGKLKEEIDLLNRDLDDMEDENEQLKQENKTLLKVVGQLTR.

Homooligomer. Interacts (via the C-terminal region) with WT1. Interacts with THAP1. Interacts with AATF. Interacts with BACE1. Interacts with SPSB1 (via B30.2/SPRY domain); this interaction is direct and occurs in association with the Elongin BC complex. Interacts with SPSB2 (via B30.2/SPRY domain); this interaction occurs in association with the Elongin BC complex. Interacts with SPSB4 (via B30.2/SPRY domain); this interaction occurs in association with the Elongin BC complex. Component of a ternary complex composed of SQSTM1 and PRKCZ. Interacts with actin. Preferentially phosphorylated at the Thr-155 by PKC in cancer cells.

The protein resides in the cytoplasm. It is found in the nucleus. Pro-apoptotic protein capable of selectively inducing apoptosis in cancer cells, sensitizing the cells to diverse apoptotic stimuli and causing regression of tumors in animal models. Induces apoptosis in certain cancer cells by activation of the Fas prodeath pathway and coparallel inhibition of NF-kappa-B transcriptional activity. Inhibits the transcriptional activation and augments the transcriptional repression mediated by WT1. Down-regulates the anti-apoptotic protein BCL2 via its interaction with WT1. Also seems to be a transcriptional repressor by itself. May be directly involved in regulating the amyloid precursor protein (APP) cleavage activity of BACE1. The sequence is that of PRKC apoptosis WT1 regulator protein (Pawr) from Rattus norvegicus (Rat).